The following is a 534-amino-acid chain: Prolyl 4-hydroxylase subunit alpha-2 (534 aa).

An N-terminal signal peptide occupies residues 1-21 (MKPWLCLVFFTSAFLIWHAEA). Asparagine 115 carries N-linked (GlcNAc...) asparagine glycosylation. One copy of the TPR repeat lies at 207 to 240 (VEILDYLSYAVFQFGDLHRAMELTRRLISLDSTH). An N-linked (GlcNAc...) asparagine glycan is attached at asparagine 263. Residues 413-519 (TAELLQVANY…KWVSNKWFHE (107 aa)) form the Fe2OG dioxygenase domain. Residues histidine 431, aspartate 433, and histidine 500 each coordinate Fe cation. Position 510 (lysine 510) interacts with 2-oxoglutarate.

The protein belongs to the P4HA family. As to quaternary structure, heterotetramer of two alpha-2 chains and two beta chains (the beta chain is the multi-functional PDI). Fe(2+) serves as cofactor. Requires L-ascorbate as cofactor.

It localises to the endoplasmic reticulum lumen. The catalysed reaction is L-prolyl-[collagen] + 2-oxoglutarate + O2 = trans-4-hydroxy-L-prolyl-[collagen] + succinate + CO2. In terms of biological role, catalyzes the post-translational formation of 4-hydroxyproline in -Xaa-Pro-Gly- sequences in collagens and other proteins. The protein is Prolyl 4-hydroxylase subunit alpha-2 (P4HA2) of Gallus gallus (Chicken).